Here is a 38-residue protein sequence, read N- to C-terminus: Large ribosomal subunit protein bL36 (38 aa).

Belongs to the bacterial ribosomal protein bL36 family.

The protein is Large ribosomal subunit protein bL36 of Flavobacterium johnsoniae (strain ATCC 17061 / DSM 2064 / JCM 8514 / BCRC 14874 / CCUG 350202 / NBRC 14942 / NCIMB 11054 / UW101) (Cytophaga johnsonae).